The following is a 605-amino-acid chain: Condensin-2 complex subunit H2 (605 aa).

Phosphothreonine is present on Thr-19. Residues Ser-95, Ser-200, Ser-208, Ser-228, and Ser-232 each carry the phosphoserine modification. The tract at residues 194–331 (LEPEGMSPME…PFDSLESKPF (138 aa)) is disordered. A compositionally biased stretch (acidic residues) spans 256 to 266 (GEDEDAEEAVE). Residues Ser-282, Ser-284, Ser-466, and Ser-492 each carry the phosphoserine modification.

Belongs to the CND2 H2 (condensin-2 subunit 2) family. Component of the condensin-2 complex, which contains the SMC2 and SMC4 heterodimer, and three non SMC subunits, NCAPG2, NCAPH2 and NCAPD3 that probably regulate the complex.

The protein resides in the nucleus. It localises to the chromosome. Regulatory subunit of the condensin-2 complex, a complex that seems to provide chromosomes with an additional level of organization and rigidity and in establishing mitotic chromosome architecture. May promote the resolution of double-strand DNA catenanes (intertwines) between sister chromatids. Condensin-mediated compaction likely increases tension in catenated sister chromatids, providing directionality for type II topoisomerase-mediated strand exchanges toward chromatid decatenation. Required for decatenation of chromatin bridges at anaphase. Early in neurogenesis, may play an essential role to ensure accurate mitotic chromosome condensation in neuron stem cells, ultimately affecting neuron pool and cortex size. Seems to have lineage-specific role in T-cell development. This Homo sapiens (Human) protein is Condensin-2 complex subunit H2 (NCAPH2).